Consider the following 216-residue polypeptide: Uracil phosphoribosyltransferase (216 aa).

5-phospho-alpha-D-ribose 1-diphosphate contacts are provided by residues Arg85, Arg110, and 136–144 (DPMLATGNS). Residues Ile201 and 206–208 (GDA) contribute to the uracil site. Asp207 provides a ligand contact to 5-phospho-alpha-D-ribose 1-diphosphate.

The protein belongs to the UPRTase family. It depends on Mg(2+) as a cofactor.

It catalyses the reaction UMP + diphosphate = 5-phospho-alpha-D-ribose 1-diphosphate + uracil. It functions in the pathway pyrimidine metabolism; UMP biosynthesis via salvage pathway; UMP from uracil: step 1/1. With respect to regulation, allosterically activated by GTP. Catalyzes the conversion of uracil and 5-phospho-alpha-D-ribose 1-diphosphate (PRPP) to UMP and diphosphate. This Rhodospirillum centenum (strain ATCC 51521 / SW) protein is Uracil phosphoribosyltransferase.